Here is a 689-residue protein sequence, read N- to C-terminus: DNA ligase (689 aa).

Residues 40–44 (DSEYD), 89–90 (SL), and glutamate 121 each bind NAD(+). Lysine 123 functions as the N6-AMP-lysine intermediate in the catalytic mechanism. The NAD(+) site is built by arginine 144, glutamate 179, lysine 295, and lysine 319. The Zn(2+) site is built by cysteine 413, cysteine 416, cysteine 431, and cysteine 437. The BRCT domain occupies 610 to 689 (REQSSLTDKI…EEWLTLIKNV (80 aa)).

This sequence belongs to the NAD-dependent DNA ligase family. LigA subfamily. Mg(2+) is required as a cofactor. The cofactor is Mn(2+).

It catalyses the reaction NAD(+) + (deoxyribonucleotide)n-3'-hydroxyl + 5'-phospho-(deoxyribonucleotide)m = (deoxyribonucleotide)n+m + AMP + beta-nicotinamide D-nucleotide.. Its function is as follows. DNA ligase that catalyzes the formation of phosphodiester linkages between 5'-phosphoryl and 3'-hydroxyl groups in double-stranded DNA using NAD as a coenzyme and as the energy source for the reaction. It is essential for DNA replication and repair of damaged DNA. This is DNA ligase from Rickettsia africae (strain ESF-5).